The primary structure comprises 64 residues: Temporin-ALd (64 aa).

Residues 1 to 22 form the signal peptide; sequence MFTMKKSLLLLFFLGTIHLSLC. Positions 23–46 are excised as a propeptide; the sequence is EQERNAEEERRDDLGERQAEVEKR. At Leu62 the chain carries Leucine amide.

As to expression, expressed by the skin glands.

It is found in the secreted. Its function is as follows. Antimicrobial peptide with activity against Gram-positive and Gram-negative bacteria and against fungi. Has been tested against S.aureus (MIC=1.25 ug/mL), B.pumilus (MIC=2.5 ug/mL), B.cereus (MIC=15.0 ug/mL), E.coli (MIC=1.25 ug/mL), B.dysenteriae (MIC=5.0 ug/mL), A.cacoaceticus (MIC=15.0 ug/mL), P.aeruginosa (MIC=5.0 ug/mL) and C.albicans (MIC=1.25 ug/mL). Also shows a weak hemolytic activity. The polypeptide is Temporin-ALd (Amolops loloensis (Lolokou Sucker Frog)).